An 86-amino-acid chain; its full sequence is Antitoxin VapB33 (86 aa).

Functionally, antitoxin component of a type II toxin-antitoxin (TA) system. Upon expression in M.smegmatis neutralizes the effect of cognate toxin VapC33. The polypeptide is Antitoxin VapB33 (vapB33) (Mycobacterium tuberculosis (strain ATCC 25618 / H37Rv)).